Consider the following 150-residue polypeptide: 15 kDa calcium-binding protein (150 aa).

Position 1 is an N-acetylalanine (Ala1). EF-hand domains lie at 7–42 (TDAEKAEFKFGFKSKDGDNSITAKELGEFLESAGKS), 43–78 (FSEEQLAQMISDVDTDKSGTIEFSEMLMGIAEKMMK), 81–116 (WKKSHFQKAFDDMDKDGNGVLSPEELHLAMSTRIEP), and 118–150 (MSKEAIDAIIAKADCDGDGKINRKEFVKLIKSS). Residues Asp22, Asp24, Ser26, Thr28, Asp56, Asp58, Ser60, Thr62, Glu67, Asp94, Asp96, Asn98, Glu105, Asp131, Asp133, Asp135, Lys137, and Glu142 each contribute to the Ca(2+) site.

The protein resides in the nucleus. The protein localises to the cytoplasm. It localises to the cytoskeleton. It is found in the spindle. In terms of biological role, may play an important role in mitosis of sea urchin egg. May function as a Ca(2+)-dependent intracellular modulator of microtubule assembly. The protein is 15 kDa calcium-binding protein of Hemicentrotus pulcherrimus (Sea urchin).